The primary structure comprises 146 residues: Large ribosomal subunit protein uL15 (146 aa).

Residues 1-13 (MKLHELKPAEGSR) show a composition bias toward basic and acidic residues. A disordered region spans residues 1–59 (MKLHELKPAEGSRKVRNRVGRGTSSGNGKTSGRGQKGQKARSGGGVRLGFEGGQTPLFR). 2 stretches are compositionally biased toward gly residues: residues 23-35 (TSSG…GRGQ) and 42-52 (SGGGVRLGFEG).

Belongs to the universal ribosomal protein uL15 family. As to quaternary structure, part of the 50S ribosomal subunit.

Its function is as follows. Binds to the 23S rRNA. This is Large ribosomal subunit protein uL15 from Streptococcus agalactiae serotype Ia (strain ATCC 27591 / A909 / CDC SS700).